A 243-amino-acid polypeptide reads, in one-letter code: 7-carboxy-7-deazaguanine synthase (243 aa).

Substrate contacts are provided by residues 15 to 17 and R30; that span reads IQG. In terms of domain architecture, Radical SAM core spans 21–239; it reads VIGQKTMFVR…PQLHTLLWGN (219 aa). Residues C34, C38, and C41 each contribute to the [4Fe-4S] cluster site. Residue S43 participates in Mg(2+) binding. S81 is a binding site for substrate. S-adenosyl-L-methionine-binding positions include G83 and 127–129; that span reads SPK.

This sequence belongs to the radical SAM superfamily. 7-carboxy-7-deazaguanine synthase family. Homodimer. The cofactor is [4Fe-4S] cluster. S-adenosyl-L-methionine serves as cofactor. Mg(2+) is required as a cofactor.

The enzyme catalyses 6-carboxy-5,6,7,8-tetrahydropterin + H(+) = 7-carboxy-7-deazaguanine + NH4(+). The protein operates within purine metabolism; 7-cyano-7-deazaguanine biosynthesis. In terms of biological role, catalyzes the complex heterocyclic radical-mediated conversion of 6-carboxy-5,6,7,8-tetrahydropterin (CPH4) to 7-carboxy-7-deazaguanine (CDG), a step common to the biosynthetic pathways of all 7-deazapurine-containing compounds. This chain is 7-carboxy-7-deazaguanine synthase, found in Bacillus subtilis (strain 168).